Consider the following 65-residue polypeptide: Large ribosomal subunit protein bL28 (65 aa).

It belongs to the bacterial ribosomal protein bL28 family.

The polypeptide is Large ribosomal subunit protein bL28 (Pseudothermotoga lettingae (strain ATCC BAA-301 / DSM 14385 / NBRC 107922 / TMO) (Thermotoga lettingae)).